The following is a 349-amino-acid chain: Quinone oxidoreductase-like protein 2 (349 aa).

Lys35 is modified (N6-acetyllysine). An N6-succinyllysine modification is found at Lys200.

The protein belongs to the zinc-containing alcohol dehydrogenase family. Quinone oxidoreductase subfamily.

The protein is Quinone oxidoreductase-like protein 2 of Bos taurus (Bovine).